The following is a 930-amino-acid chain: GPI ethanolamine phosphate transferase 1 (930 aa).

At 1-8 the chain is on the cytoplasmic side; it reads MARLGRTG. The chain crosses the membrane as a helical span at residues 9-29; sequence FLTLAVVFHLIYAYSIFDIYF. Residues 30-466 are Lumenal-facing; sequence VSPIVSGMRP…LQTYDWLFLR (437 aa). The N-linked (GlcNAc...) asparagine glycan is linked to Asn-148. A helical membrane pass occupies residues 467–487; that stretch reads TIVTFGYVGWIAYALTTVIHL. The Cytoplasmic segment spans residues 488–498; that stretch reads HVLHGASESDR. A helical transmembrane segment spans residues 499–519; the sequence is TTASISFFSSVLVALFSVFLY. The Lumenal segment spans residues 520-521; that stretch reads QG. A helical membrane pass occupies residues 522-542; the sequence is SPWRYYLYGFFPIFFWEEVFA. Residues 543–569 are Cytoplasmic-facing; it reads RRKAFHAGRAGALLLPKRDLHSNKVED. Residues 570–590 form a helical membrane-spanning segment; sequence IDTITYGGAFMLLTGLLYLLF. Residues 591–611 are Lumenal-facing; that stretch reads EDEILGTSHQPAAVSRKGSRN. The chain crosses the membrane as a helical span at residues 612–632; that stretch reads IMGLQLGMVLLALIVTRSSAA. The Cytoplasmic portion of the chain corresponds to 633–639; that stretch reads SLQAKQG. A helical transmembrane segment spans residues 640-660; that stretch reads LPFGNQVVGWGVLIASLLLPF. Residues 661-684 lie on the Lumenal side of the membrane; that stretch reads AHRLYPNSHYLHRLMIIFLTFSPT. Residues 685–705 form a helical membrane-spanning segment; sequence FIILTISYEGLFYFAFCMTLV. The Cytoplasmic segment spans residues 706–761; that stretch reads TWVRLEHATYVYTAKPVAKQAQETIEPPKKANPGATTVVDGETYRFRTLTVSDARV. A helical membrane pass occupies residues 762 to 782; that stretch reads ALFFFFLLQSAFFSTGNIASI. The Lumenal portion of the chain corresponds to 783 to 803; the sequence is SSFSLDSVYRLIPVFNPFSQG. A helical membrane pass occupies residues 804-824; that stretch reads ALLILKLLIPFAIISANLGIL. Residues 825–833 are Cytoplasmic-facing; sequence NRRLEVAPS. The helical transmembrane segment at 834–854 threads the bilayer; it reads ALFMVVMAISDVMTLNFFYMV. Residues 855 to 870 lie on the Lumenal side of the membrane; it reads RDEGSWLDIGTTISHF. The chain crosses the membrane as a helical span at residues 871-891; the sequence is CIASFLCTFVAGLEFLSEVFI. Over 892–930 the chain is Cytoplasmic; the sequence is SGVDFGLRTDAITASVPDIVNGITSKGQKDVPNGVEDKE.

The protein belongs to the PIGG/PIGN/PIGO family. PIGN subfamily.

It localises to the endoplasmic reticulum membrane. It functions in the pathway glycolipid biosynthesis; glycosylphosphatidylinositol-anchor biosynthesis. In terms of biological role, ethanolamine phosphate transferase involved in glycosylphosphatidylinositol-anchor biosynthesis. Transfers ethanolamine phosphate to the first alpha-1,4-linked mannose of the glycosylphosphatidylinositol precursor of GPI-anchor. The chain is GPI ethanolamine phosphate transferase 1 (mcd4) from Emericella nidulans (strain FGSC A4 / ATCC 38163 / CBS 112.46 / NRRL 194 / M139) (Aspergillus nidulans).